A 136-amino-acid polypeptide reads, in one-letter code: Aspartate 1-decarboxylase (136 aa).

The Schiff-base intermediate with substrate; via pyruvic acid role is filled by S25. Pyruvic acid (Ser) is present on S25. T57 serves as a coordination point for substrate. Catalysis depends on Y58, which acts as the Proton donor. 73–75 contributes to the substrate binding site; the sequence is GAA.

Belongs to the PanD family. As to quaternary structure, heterooctamer of four alpha and four beta subunits. It depends on pyruvate as a cofactor. In terms of processing, is synthesized initially as an inactive proenzyme, which is activated by self-cleavage at a specific serine bond to produce a beta-subunit with a hydroxyl group at its C-terminus and an alpha-subunit with a pyruvoyl group at its N-terminus.

Its subcellular location is the cytoplasm. The catalysed reaction is L-aspartate + H(+) = beta-alanine + CO2. The protein operates within cofactor biosynthesis; (R)-pantothenate biosynthesis; beta-alanine from L-aspartate: step 1/1. Catalyzes the pyruvoyl-dependent decarboxylation of aspartate to produce beta-alanine. This is Aspartate 1-decarboxylase from Acidothermus cellulolyticus (strain ATCC 43068 / DSM 8971 / 11B).